A 218-amino-acid chain; its full sequence is Adenylate kinase (218 aa).

10–15 contributes to the ATP binding site; that stretch reads GAGKGT. Residues 30 to 59 form an NMP region; that stretch reads STGDMLRAAVKAGTPLGIEAKKVMDSGGLV. Residues Thr-31, Arg-36, 57–59, 85–88, and Gln-92 each bind AMP; these read GLV and GFPR. An LID region spans residues 122–159; sequence GRRSHSASGRTYHVKYNPPKVEGLDDVTGEPLIQREDD. ATP contacts are provided by residues Arg-123 and 132–133; that span reads TY. Residues Arg-156 and Arg-167 each contribute to the AMP site. Residue Gly-203 coordinates ATP.

This sequence belongs to the adenylate kinase family. In terms of assembly, monomer.

It localises to the cytoplasm. The enzyme catalyses AMP + ATP = 2 ADP. Its pathway is purine metabolism; AMP biosynthesis via salvage pathway; AMP from ADP: step 1/1. Its function is as follows. Catalyzes the reversible transfer of the terminal phosphate group between ATP and AMP. Plays an important role in cellular energy homeostasis and in adenine nucleotide metabolism. The sequence is that of Adenylate kinase from Polaromonas naphthalenivorans (strain CJ2).